The sequence spans 71 residues: Large ribosomal subunit protein uL29 (71 aa).

This sequence belongs to the universal ribosomal protein uL29 family.

The polypeptide is Large ribosomal subunit protein uL29 (Methanocella arvoryzae (strain DSM 22066 / NBRC 105507 / MRE50)).